We begin with the raw amino-acid sequence, 207 residues long: Probable RNA 2'-phosphotransferase (207 aa).

The protein belongs to the KptA/TPT1 family.

In terms of biological role, removes the 2'-phosphate from RNA via an intermediate in which the phosphate is ADP-ribosylated by NAD followed by a presumed transesterification to release the RNA and generate ADP-ribose 1''-2''-cyclic phosphate (APPR&gt;P). May function as an ADP-ribosylase. The protein is Probable RNA 2'-phosphotransferase of Methanosarcina mazei (strain ATCC BAA-159 / DSM 3647 / Goe1 / Go1 / JCM 11833 / OCM 88) (Methanosarcina frisia).